Consider the following 341-residue polypeptide: S-adenosylmethionine:tRNA ribosyltransferase-isomerase (341 aa).

The protein belongs to the QueA family. Monomer.

It localises to the cytoplasm. It catalyses the reaction 7-aminomethyl-7-carbaguanosine(34) in tRNA + S-adenosyl-L-methionine = epoxyqueuosine(34) in tRNA + adenine + L-methionine + 2 H(+). Its pathway is tRNA modification; tRNA-queuosine biosynthesis. Transfers and isomerizes the ribose moiety from AdoMet to the 7-aminomethyl group of 7-deazaguanine (preQ1-tRNA) to give epoxyqueuosine (oQ-tRNA). In Clostridium beijerinckii (strain ATCC 51743 / NCIMB 8052) (Clostridium acetobutylicum), this protein is S-adenosylmethionine:tRNA ribosyltransferase-isomerase.